The following is a 280-amino-acid chain: MQAKYSSTRDMLDDDGDTTMSLHSQGSATTRHPEPRRTEHRAPSSTWRPVALTLLTLCLVLLIGLAALGLLFFQYYQLSNTGQDTISQMEERLGNTSQELQSLQVQNIKLAGSLQHVAEKLCRELYNKAGAHRCSPCTEQWKWHGDNCYQFYKDSKSWEDCKYFCLSENSTMLKINKQEDLEFAASQSYSEFFYSYWTGLLRPDSGKAWLWMDGTPFTSELFHIIIDVTSPRSRDCVAILNGMIFSKDCKELKRCVCERRAGMVKPESLHVPPETLGEGD.

The segment at Met-1–Ser-44 is disordered. Residues Met-1–Leu-52 are Cytoplasmic-facing. Polar residues predominate over residues Thr-18–Thr-30. Over residues Arg-31 to Ala-42 the composition is skewed to basic and acidic residues. Residues Thr-53–Phe-73 traverse the membrane as a helical; Signal-anchor for type II membrane protein segment. The Extracellular segment spans residues Gln-74–Asp-280. 2 N-linked (GlcNAc...) asparagine glycosylation sites follow: Asn-95 and Asn-169. The 115-residue stretch at His-144 to Glu-258 folds into the C-type lectin domain. Disulfide bonds link Cys-165–Cys-257 and Cys-236–Cys-249.

As to expression, expressed preferentially in dendritic cells.

The protein localises to the membrane. This Homo sapiens (Human) protein is C-type lectin domain family 1 member A (CLEC1A).